The chain runs to 406 residues: Na(+)/H(+) antiporter NhaA (406 aa).

12 helical membrane passes run 29 to 49, 75 to 95, 111 to 131, 141 to 161, 170 to 190, 195 to 215, 220 to 240, 242 to 262, 278 to 298, 306 to 326, 349 to 369, and 382 to 402; these read FAGILLIIAFTLAIIVSNNIF, FIELVNDGLMTFFFLLIGLEM, ILPAVAALGGVVVPVLIYMFF, GWAIPIATDTAFVLGILSFFS, AFIIGFSLIDDAFALIILALF, INTPALLISSVIIFILFILNY, QLFYYIIVGLLLWISMVESGI, GTLCGAIIALFIPVNIKGEFN, YFILPLFVFMNSGILLEYFAF, ILALIYGIIFGLFVGKQLGIM, FYSIAILGGIGFTLSLFIGSI, and AAVIIGSLISALFGVAVLKYC.

Belongs to the NhaA Na(+)/H(+) (TC 2.A.33) antiporter family.

The protein resides in the cell inner membrane. It carries out the reaction Na(+)(in) + 2 H(+)(out) = Na(+)(out) + 2 H(+)(in). In terms of biological role, na(+)/H(+) antiporter that extrudes sodium in exchange for external protons. The sequence is that of Na(+)/H(+) antiporter NhaA from Rickettsia massiliae (strain Mtu5).